A 446-amino-acid chain; its full sequence is Argininosuccinate lyase (446 aa).

The protein belongs to the lyase 1 family. Argininosuccinate lyase subfamily.

It localises to the cytoplasm. The catalysed reaction is 2-(N(omega)-L-arginino)succinate = fumarate + L-arginine. It functions in the pathway amino-acid biosynthesis; L-arginine biosynthesis; L-arginine from L-ornithine and carbamoyl phosphate: step 3/3. This is Argininosuccinate lyase from Phocaeicola vulgatus (strain ATCC 8482 / DSM 1447 / JCM 5826 / CCUG 4940 / NBRC 14291 / NCTC 11154) (Bacteroides vulgatus).